Reading from the N-terminus, the 173-residue chain is Crossover junction endodeoxyribonuclease RuvC (173 aa).

Residues aspartate 8, glutamate 67, and aspartate 139 contribute to the active site. Positions 8, 67, and 139 each coordinate Mg(2+).

It belongs to the RuvC family. In terms of assembly, homodimer which binds Holliday junction (HJ) DNA. The HJ becomes 2-fold symmetrical on binding to RuvC with unstacked arms; it has a different conformation from HJ DNA in complex with RuvA. In the full resolvosome a probable DNA-RuvA(4)-RuvB(12)-RuvC(2) complex forms which resolves the HJ. The cofactor is Mg(2+).

Its subcellular location is the cytoplasm. The enzyme catalyses Endonucleolytic cleavage at a junction such as a reciprocal single-stranded crossover between two homologous DNA duplexes (Holliday junction).. The RuvA-RuvB-RuvC complex processes Holliday junction (HJ) DNA during genetic recombination and DNA repair. Endonuclease that resolves HJ intermediates. Cleaves cruciform DNA by making single-stranded nicks across the HJ at symmetrical positions within the homologous arms, yielding a 5'-phosphate and a 3'-hydroxyl group; requires a central core of homology in the junction. The consensus cleavage sequence is 5'-(A/T)TT(C/G)-3'. Cleavage occurs on the 3'-side of the TT dinucleotide at the point of strand exchange. HJ branch migration catalyzed by RuvA-RuvB allows RuvC to scan DNA until it finds its consensus sequence, where it cleaves and resolves the cruciform DNA. In Shewanella baltica (strain OS223), this protein is Crossover junction endodeoxyribonuclease RuvC.